Here is a 602-residue protein sequence, read N- to C-terminus: Cholinesterase (602 aa).

A signal peptide spans 1 to 28; sequence MHSKVTIICIRFLFWFLLLCMLIGKSHT. N45 and N85 each carry an N-linked (GlcNAc...) (complex) asparagine glycan. C93 and C120 form a disulfide bridge. Tacrine is bound at residue W110. N-linked (GlcNAc...) (complex) asparagine glycosylation occurs at N134. 144 to 145 contacts substrate; the sequence is GG. The active-site Acyl-ester intermediate is the S226. The residue at position 226 (S226) is a Phosphoserine. N-linked (GlcNAc...) (complex) asparagine glycans are attached at residues N269 and N284. C280 and C291 are disulfide-bonded. E353 (charge relay system) is an active-site residue. N369 carries an N-linked (GlcNAc...) (complex) asparagine glycan. A disulfide bridge connects residues C428 and C547. Residue H466 participates in tacrine binding. H466 serves as the catalytic Charge relay system. The N-linked (GlcNAc...) (complex) asparagine glycan is linked to N483. N509, N513, and N514 each carry an N-linked (GlcNAc...) asparagine glycan.

Belongs to the type-B carboxylesterase/lipase family. As to quaternary structure, homotetramer; disulfide-linked. Dimer of dimers. Post-translationally, N-glycosylated. No other PTM detected. The major N-glycan structures are of the complex diantennary type with 1 and 2 N-acetylneuraminic acid molecules (Neu5Ac) making up approximately 33% and 47% of the total N-glycans, respectively. Only low amounts of fucosylated diantennary N-glycans are detected (approximately 2%). Triantennary N-glycans with or without fucose amount to approximately 13%, whereas 5% of the total N-glycans are of the oligomannosidic or hybrid type. As to expression, detected in blood plasma (at protein level). Present in most cells except erythrocytes.

Its subcellular location is the secreted. The enzyme catalyses an acylcholine + H2O = a carboxylate + choline + H(+). Its activity is regulated as follows. Inhibited by mercury. Inhibited by Tabun. Tabun forms a covalent adduct with Ser-226 that becomes irreversible upon aging. Its function is as follows. Esterase with broad substrate specificity. Contributes to the inactivation of the neurotransmitter acetylcholine. Can degrade neurotoxic organophosphate esters. In Homo sapiens (Human), this protein is Cholinesterase (BCHE).